The primary structure comprises 259 residues: MFRKRLVNKSSSDEKNQKKRQKINFSEEKLVASDEEKGSSDLMSLAKSGNSRTLQLSHENEGKLQKKGEDLDKYTLTVNDDSTKEDLLNFERKELAEKAKKRRPSDDNELVLNMSGKNKRLTKQINQPTNIRTTVLMDFQPDVCKDYKQTGYCGYGDSCKFLHSRDDFKTGWKLNQEWNADKEDSKAVTLDLEKIPFKCTLCKEDYKSPVVTNCGHYFCGSCFAKDMKKGTKCFICHKETHGSAKVASDLQKMLNKRKS.

The disordered stretch occupies residues 1-67 (MFRKRLVNKS…HENEGKLQKK (67 aa)). The span at 25–39 (FSEEKLVASDEEKGS) shows a compositional bias: basic and acidic residues. A Phosphoserine modification is found at S33. The span at 47-57 (KSGNSRTLQLS) shows a compositional bias: polar residues. Positions 58–67 (HENEGKLQKK) are enriched in basic and acidic residues. S105 is modified (phosphoserine). A C3H1-type zinc finger spans residues 138-166 (DFQPDVCKDYKQTGYCGYGDSCKFLHSRD). The RING-type zinc-finger motif lies at 199-237 (CTLCKEDYKSPVVTNCGHYFCGSCFAKDMKKGTKCFICH).

This sequence belongs to the CWC24 family. Belongs to the CWC complex (or CEF1-associated complex), a spliceosome sub-complex reminiscent of a late-stage spliceosome composed of the U2, U5 and U6 snRNAs and at least BUD13, BUD31, BRR2, CDC40, CEF1, CLF1, CUS1, CWC2, CWC15, CWC21, CWC22, CWC23, CWC24, CWC25, CWC27, ECM2, HSH155, IST3, ISY1, LEA1, MSL1, NTC20, PRP8, PRP9, PRP11, PRP19, PRP21, PRP22, PRP45, PRP46, SLU7, SMB1, SMD1, SMD2, SMD3, SMX2, SMX3, SNT309, SNU114, SPP2, SYF1, SYF2, RSE1 and YJU2.

The protein localises to the nucleus. Its function is as follows. Involved in pre-mRNA splicing. In Saccharomyces cerevisiae (strain ATCC 204508 / S288c) (Baker's yeast), this protein is Pre-mRNA-splicing factor CWC24 (CWC24).